The primary structure comprises 226 residues: ATP-dependent dethiobiotin synthetase BioD (226 aa).

An ATP-binding site is contributed by 12-17; the sequence is GVGKTV. T16 provides a ligand contact to Mg(2+). The active site involves K37. A substrate-binding site is contributed by T41. Residues D49, 108 to 111, 169 to 170, and 197 to 199 contribute to the ATP site; these read EGAG, GS, and PAG. Mg(2+) is bound by residues D49 and E108.

It belongs to the dethiobiotin synthetase family. As to quaternary structure, homodimer. Mg(2+) is required as a cofactor.

The protein resides in the cytoplasm. It carries out the reaction (7R,8S)-7,8-diammoniononanoate + CO2 + ATP = (4R,5S)-dethiobiotin + ADP + phosphate + 3 H(+). It participates in cofactor biosynthesis; biotin biosynthesis; biotin from 7,8-diaminononanoate: step 1/2. In terms of biological role, catalyzes a mechanistically unusual reaction, the ATP-dependent insertion of CO2 between the N7 and N8 nitrogen atoms of 7,8-diaminopelargonic acid (DAPA, also called 7,8-diammoniononanoate) to form a ureido ring. This chain is ATP-dependent dethiobiotin synthetase BioD, found in Mycobacterium tuberculosis (strain ATCC 25177 / H37Ra).